Consider the following 288-residue polypeptide: uncharacterized protein (288 aa).

An ATP-grasp domain is found at 107-288 (KQIPTLIGPQ…LAIQLLASIA (182 aa)). Residues Lys145 and 178–188 (QQYIATSNSEA) contribute to the ATP site. Asp248, Glu261, and Asn263 together coordinate Mg(2+). Positions 248, 261, and 263 each coordinate Mn(2+).

This sequence belongs to the RimK family.

This is an uncharacterized protein from Mycoplasma pneumoniae (strain ATCC 29342 / M129 / Subtype 1) (Mycoplasmoides pneumoniae).